The following is a 108-amino-acid chain: PTS system cellobiose-specific EIIB component (108 aa).

Residues 3–108 (DKVIALACAA…VLAAAENLMN (106 aa)) form the PTS EIIB type-3 domain. C10 acts as the Phosphocysteine intermediate in catalysis. C10 carries the post-translational modification Phosphocysteine; by EIIA.

The enzyme catalyses D-cellobiose(out) + N(pros)-phospho-L-histidyl-[protein] = 6-phospho-beta-D-glucosyl-(1-&gt;4)-D-glucose(in) + L-histidyl-[protein]. The phosphoenolpyruvate-dependent sugar phosphotransferase system (sugar PTS), a major carbohydrate active transport system, catalyzes the phosphorylation of incoming sugar substrates concomitantly with their translocation across the cell membrane. Involved in cellobiose transport with PtcA and CelB. This system can also transport lactose. This chain is PTS system cellobiose-specific EIIB component, found in Lactococcus lactis subsp. lactis (strain IL1403) (Streptococcus lactis).